We begin with the raw amino-acid sequence, 194 residues long: UPF0301 protein FTM_0963 (194 aa).

It belongs to the UPF0301 (AlgH) family.

The sequence is that of UPF0301 protein FTM_0963 from Francisella tularensis subsp. mediasiatica (strain FSC147).